The primary structure comprises 395 residues: Cytochrome b561 and DOMON domain-containing protein At5g47530 (395 aa).

Residues 1-24 (MAISSNLLLCLSLFIFIITKSALA) form the signal peptide. The 116-residue stretch at 47–162 (LDSFLHYTYD…GIINTVWQDG (116 aa)) folds into the DOMON domain. The Cytochrome b561 domain maps to 176–371 (GNNVRSVSTL…LEGFTWYVVI (196 aa)). A run of 2 helical transmembrane segments spans residues 210-230 (IHGI…AIIA) and 242-262 (AWFY…VAGW). Residues H211, H247, and H280 each coordinate heme b. A helical transmembrane segment spans residues 282 to 302 (AVGIALFCLATIQVFAMFLRP). Heme b is bound at residue H316. A run of 2 helical transmembrane segments spans residues 318 to 338 (TVGY…LDIL) and 351 to 371 (IIVV…YVVI).

It depends on heme b as a cofactor.

The protein resides in the membrane. Functionally, may act as a catecholamine-responsive trans-membrane electron transporter. This chain is Cytochrome b561 and DOMON domain-containing protein At5g47530, found in Arabidopsis thaliana (Mouse-ear cress).